Here is a 650-residue protein sequence, read N- to C-terminus: MKSSRKRTKRRVLQDMSISGLLLSVALLPSVVSAQDHVYLDPSSSGSPYLGPQIPLTGLPALTGTHEFTLRHIYQRGTHDQPDLHRRLDIKPHTRLWAVSDDGLEKELVTFDTPLVASSSPLTIQRLADRRLSVIEGYLAAARSRGEAVALSPSEWVMDTLAGPNVTDKESVLTFAKMTANDYIEEPGSGDWHYIHGRFNYSSSFGWQSDGLRGHIYADKTNSTIVISLKGTSPALFDGAGTTTNDKINDNLFFSCCCGQGGSYLWRQVCDCQQSAFTANLTCIVEAMNDENRYYRAAIDLYSNVTDMYPDANVWLTGHSLGGAMSSLLGLTFGLPVVTFEAVPEALPAARLGLPSPPGHDPRLPQSRQYTGAYHFGHTADPVYMGTCNGVGSICTWGGYAMESACHTGQMCVYDTVEDKGWRVALSTHRIEAVISDVLEVYEDIPPCAPEEECYDCELWKFFKSNGSESTTTSTTTTTTAPTTTRTSTCKTPGWWGCLDESTTTTTTTSTTTTTTTTTTSTCKTPGWFGCKDPTTTTEATAAPSVTTSIPTPTTYPTSSTSTCKDPGWFGCRDPPSTTASITSSPSTTSTCDDPGFFWGCYDESTTATHPITSGPSAPYSTPSPTHEHTCTSSIFFGLICVGSTGTELR.

The Cytoplasmic portion of the chain corresponds to 1 to 11 (MKSSRKRTKRR). Residues 12–32 (VLQDMSISGLLLSVALLPSVV) form a helical; Signal-anchor for type II membrane protein membrane-spanning segment. Topologically, residues 33–650 (SAQDHVYLDP…CVGSTGTELR (618 aa)) are lumenal. N-linked (GlcNAc...) asparagine glycans are attached at residues Asn165, Asn200, Asn222, Asn280, and Asn304. Catalysis depends on Ser320, which acts as the Charge relay system. Asn466 is a glycosylation site (N-linked (GlcNAc...) asparagine).

This sequence belongs to the AB hydrolase superfamily. Lipase family. As to quaternary structure, binds to both phosphatidylinositol (PI) and phosphatidylinositol 3,5-bisphosphate (PIP2).

The protein localises to the endosome. It is found in the multivesicular body membrane. The protein resides in the prevacuolar compartment membrane. It carries out the reaction a triacylglycerol + H2O = a diacylglycerol + a fatty acid + H(+). Functionally, lipase which is essential for lysis of subvacuolar cytoplasm to vacuole targeted bodies and intravacuolar autophagic bodies. Involved in the lysis of intravacuolar multivesicular body (MVB) vesicles. The intravacuolar membrane disintegration by atg15 is critical to life span extension. This is Putative lipase atg15 (atg15) from Aspergillus fumigatus (strain ATCC MYA-4609 / CBS 101355 / FGSC A1100 / Af293) (Neosartorya fumigata).